The primary structure comprises 471 residues: Lincomycin resistance protein LmrB (471 aa).

Transmembrane regions (helical) follow at residues 13–35 (PIPIIASFLMAGFIGLFSETALN), 55–77 (LTTGYLLTLGILVPISGLLLQWF), 84–106 (FTAVSFSIAGTLIAALSPTFAML), 111–133 (VVQAVGTALLLPLMFNTILLIFP), 140–162 (AMGMIGLVIMFAPAVGPTISGLI), 167–189 (TWNWIFWISLPFLIIALLFGMKF), 201–223 (IDILSIILSTLGFGGVVFAFSSA), 227–249 (GWGSATVLVSIIVGGIALGLFVW), 269–291 (FTLGLILVFISFMMILSTMILLP), 329–351 (AYGPRALVIPGFIVAVVALFFLT), 358–380 (SALTIIVLHSVLMIGISMVMMPA), and 445–467 (GIQNAFVFGLIMACIGLLCSLFI).

It belongs to the major facilitator superfamily. EmrB family.

Its subcellular location is the cell membrane. Proton-dependent transporter. May mediate the efflux of lincomycin. The chain is Lincomycin resistance protein LmrB (lmrB) from Listeria monocytogenes serovar 1/2a (strain ATCC BAA-679 / EGD-e).